The primary structure comprises 197 residues: RNA pyrophosphohydrolase (197 aa).

A Nudix hydrolase domain is found at 6 to 154 (GYRPNVGIVL…KREVYQLALS (149 aa)). Positions 38–59 (GGIQHGESPEQAMYRELHEEVG) match the Nudix box motif.

The protein belongs to the Nudix hydrolase family. RppH subfamily. Requires a divalent metal cation as cofactor.

Its function is as follows. Accelerates the degradation of transcripts by removing pyrophosphate from the 5'-end of triphosphorylated RNA, leading to a more labile monophosphorylated state that can stimulate subsequent ribonuclease cleavage. This chain is RNA pyrophosphohydrolase, found in Polynucleobacter necessarius subsp. necessarius (strain STIR1).